Reading from the N-terminus, the 591-residue chain is UvrABC system protein C (591 aa).

The 78-residue stretch at D14–I91 folds into the GIY-YIG domain. Residues D196–L231 form the UVR domain.

This sequence belongs to the UvrC family. In terms of assembly, interacts with UvrB in an incision complex.

It localises to the cytoplasm. The UvrABC repair system catalyzes the recognition and processing of DNA lesions. UvrC both incises the 5' and 3' sides of the lesion. The N-terminal half is responsible for the 3' incision and the C-terminal half is responsible for the 5' incision. This is UvrABC system protein C from Streptococcus uberis (strain ATCC BAA-854 / 0140J).